A 113-amino-acid polypeptide reads, in one-letter code: Probable UPF0122 protein (113 aa).

The protein belongs to the UPF0122 family.

Functionally, might take part in the signal recognition particle (SRP) pathway. This is inferred from the conservation of its genetic proximity to ftsY/ffh. May be a regulatory protein. The polypeptide is Probable UPF0122 protein (Mycoplasma mycoides).